A 1721-amino-acid polypeptide reads, in one-letter code: Intersectin-1 (1721 aa).

The region spanning 21-109 is the EH 1 domain; it reads ERAKHDQQFH…PVMKQQPVAI (89 aa). Residues 53–88 enclose the EF-hand 1 domain; it reads LPQPVLAQIWALADMNNDGRMDQVEFSIAMKLIKLK. Ca(2+) is bound by residues aspartate 66, asparagine 68, aspartate 70, arginine 72, and glutamate 77. Serine 203 bears the Phosphoserine mark. Positions 221–310 constitute an EH 2 domain; it reads SRLKYRQLFN…PEYIPPSFRR (90 aa). An EF-hand 2 domain is found at 254-289; the sequence is LPQAQLASIWNLSDIDQDGKLTAEEFILAMHLIDVA. The Ca(2+) site is built by aspartate 267, aspartate 269, aspartate 271, lysine 273, and glutamate 278. Serine 318 carries the post-translational modification Phosphoserine. Disordered stretches follow at residues 322 to 348 and 650 to 701; these read STSV…KLPV and QRRA…KQEA. The KLERQ stretch occupies residues 326–702; the sequence is DQRLPEEPVL…GEEKGKQEAQ (377 aa). The stretch at 355–659 forms a coiled coil; it reads RENFERGNLE…QRRAQERDKQ (305 aa). Phosphoserine is present on serine 687. One can recognise an SH3 1 domain in the interval 740 to 806; the sequence is VKVVYYRALY…PANYAEKIPE (67 aa). A disordered region spans residues 836–868; sequence LAVTSSEPSTTPNNWADFSSTWPTSTNEKPETD. The segment covering 838 to 862 has biased composition (polar residues); that stretch reads VTSSEPSTTPNNWADFSSTWPTSTN. Threonine 897 is subject to Phosphothreonine. Serine 901, serine 902, and serine 904 each carry phosphoserine. The region spanning 913–971 is the SH3 2 domain; sequence VEGLQAQALYPWRAKKDNHLNFNKNDVITVLEQQDMWWFGEVQGQKGWFPKSYVKLISG. Phosphoserine is present on residues serine 978, serine 986, and serine 995. SH3 domains follow at residues 1002-1060 and 1074-1138; these read VSGE…LKDS and KKPE…LLSP. The interval 1074–1138 is required for interaction with FCHSD2; that stretch reads KKPEIAQVIA…PANYVKLLSP (65 aa). Positions 1104-1127 match the Bipartite nuclear localization signal; in isoform 2 motif; it reads RKKNPGGWWEGELQARGKKRQIGW. Serine 1137 is subject to Phosphoserine. Threonine 1144 is modified (phosphothreonine). Residues 1155-1214 enclose the SH3 5 domain; it reads AAVCQVIGMYDYTAQNDDELAFNKGQIINVLNKEDPDWWKGEVNGQVGLFPSNYVKLTTD. The 187-residue stretch at 1237 to 1423 folds into the DH domain; it reads KRQGYIHELI…EELCSQVNEG (187 aa). Positions 1462 to 1571 constitute a PH domain; sequence KFLHSGKLYK…WVQKIKAASE (110 aa). The region spanning 1579–1695 is the C2 domain; it reads KKREKAYLVR…KKDQGSKGPV (117 aa). Serine 1645 is modified (phosphoserine). Ca(2+) is bound by residues aspartate 1667, serine 1670, and aspartate 1673.

Interacts (via DH domain) with CDC42. Interacts (via SH3 domain 1) with WASL. Interacts with dynamin, SNAP25 and SNAP23. Interacts with clathrin-associated proteins and other components of the endocytic machinery, such as SPIN90, EPS15, EPN1, EPN2, STON2, FCHO1, FCHO2 and DAB2. Interacts (via SH3 domains) with REPS1 and SGIP1. Interacts with ARHGAP31. Interacts with ADAM15. Interacts with PRRT2. Interacts (via SH3 domain 4) with FCHSD2 (via SH3 domain 2). Interacts (via SH3 domain 1) with DENND2B. Interacts (via SH3 domains) with CBL. Isoform 2: Interacts with CBL and DNM1. Isoform 2: Interacts with LMNA. Isoform 2: Interacts with importin subunit KPNA1; this is likely to mediate its import into the nucleus. Interacts with DNM2. As to quaternary structure, (Microbial infection) Interacts with vaccinia virus protein A36. The cofactor is Ca(2+). As to expression, isoform 1 is expressed almost exclusively in the brain. Isoform 2 is detected in brain, spleen, lung, liver, heart, skeletal muscle and kidney. Isoform 5 is primarily expressed in brain, spleen, lung and kidney (at protein level). Isoform 1 and isoform 2 are detected in brain. Isoform 2 is ubiquitous in adult and fetal tissues with high expression in skeletal muscle, heart, spleen, ovary, testis and all fetal tissues tested and low expression in thymus, blood, lung, liver and pancreas. Isoform 1 is expressed almost exclusively in the brain, in all brain regions. Not expressed in the spinal cord.

It is found in the endomembrane system. It localises to the synapse. The protein resides in the synaptosome. The protein localises to the cell projection. Its subcellular location is the lamellipodium. It is found in the cell membrane. It localises to the membrane. The protein resides in the clathrin-coated pit. The protein localises to the recycling endosome. Its subcellular location is the endosome. It is found in the cytoplasmic vesicle. It localises to the cytoplasm. The protein resides in the nucleus envelope. Its function is as follows. Adapter protein that provides a link between the endocytic membrane traffic and the actin assembly machinery. Acts as a guanine nucleotide exchange factor (GEF) for CDC42, and thereby stimulates actin nucleation mediated by WASL and the ARP2/3 complex. Plays a role in the assembly and maturation of clathrin-coated vesicles. Recruits FCHSD2 to clathrin-coated pits. Involved in endocytosis of activated EGFR, and probably also other growth factor receptors. Involved in endocytosis of integrin beta-1 (ITGB1) and transferrin receptor (TFR); internalization of ITGB1 as DAB2-dependent cargo but not TFR may involve association with DAB2. Promotes ubiquitination and subsequent degradation of EGFR, and thereby contributes to the down-regulation of EGFR-dependent signaling pathways. In chromaffin cells, required for normal exocytosis of catecholamines. Required for rapid replenishment of release-ready synaptic vesicles at presynaptic active zones. Inhibits ARHGAP31 activity toward RAC1. In terms of biological role, plays a role in synaptic vesicle endocytosis in brain neurons. This chain is Intersectin-1, found in Homo sapiens (Human).